The chain runs to 170 residues: uncharacterized protein (170 aa).

The interval 35-57 (EEVMPATAPSTDPAVPKDAQEAD) is disordered.

This is an uncharacterized protein from Candida tsukubaensis (Yeast).